The following is a 159-amino-acid chain: 3-hydroxyacyl-[acyl-carrier-protein] dehydratase FabZ (159 aa).

Histidine 58 is an active-site residue.

Belongs to the thioester dehydratase family. FabZ subfamily.

It is found in the cytoplasm. It catalyses the reaction a (3R)-hydroxyacyl-[ACP] = a (2E)-enoyl-[ACP] + H2O. Functionally, involved in unsaturated fatty acids biosynthesis. Catalyzes the dehydration of short chain beta-hydroxyacyl-ACPs and long chain saturated and unsaturated beta-hydroxyacyl-ACPs. In Helicobacter pylori (strain ATCC 700392 / 26695) (Campylobacter pylori), this protein is 3-hydroxyacyl-[acyl-carrier-protein] dehydratase FabZ.